The sequence spans 1203 residues: Chromosome partition protein Smc (1203 aa).

Residue 32 to 39 coordinates ATP; it reads PNGSGKSN. Coiled coils occupy residues 167–203, 250–288, and 327–497; these read ILKYRRRKEKALRKLDAMSANLARLTDLTTELRRQLK, MMRRDHDEAAARLAVASEELAAHEAALTELSGRAESVQQ, and DVLE…LERK. In terms of domain architecture, SMC hinge spans 511 to 622; the sequence is GLLGSIAKLV…VVNYLAEALG (112 aa). 3 coiled-coil regions span residues 657-689, 720-765, and 976-1030; these read EVTSEIDKAGAELAAAEAHMAQLNAALSGALSE, RLGQ…NVEQ, and YDRA…RKDL.

Belongs to the SMC family. Homodimer.

It is found in the cytoplasm. Functionally, required for chromosome condensation and partitioning. The polypeptide is Chromosome partition protein Smc (Mycobacterium leprae (strain TN)).